The primary structure comprises 188 residues: GTP cyclohydrolase 1 (188 aa).

The Zn(2+) site is built by cysteine 73, histidine 76, and cysteine 144.

Belongs to the GTP cyclohydrolase I family. As to quaternary structure, homomer.

The catalysed reaction is GTP + H2O = 7,8-dihydroneopterin 3'-triphosphate + formate + H(+). It functions in the pathway cofactor biosynthesis; 7,8-dihydroneopterin triphosphate biosynthesis; 7,8-dihydroneopterin triphosphate from GTP: step 1/1. This is GTP cyclohydrolase 1 from Caldivirga maquilingensis (strain ATCC 700844 / DSM 13496 / JCM 10307 / IC-167).